Here is a 251-residue protein sequence, read N- to C-terminus: Pyrroloquinoline-quinone synthase (251 aa).

Belongs to the PqqC family.

The enzyme catalyses 6-(2-amino-2-carboxyethyl)-7,8-dioxo-1,2,3,4,7,8-hexahydroquinoline-2,4-dicarboxylate + 3 O2 = pyrroloquinoline quinone + 2 H2O2 + 2 H2O + H(+). It participates in cofactor biosynthesis; pyrroloquinoline quinone biosynthesis. In terms of biological role, ring cyclization and eight-electron oxidation of 3a-(2-amino-2-carboxyethyl)-4,5-dioxo-4,5,6,7,8,9-hexahydroquinoline-7,9-dicarboxylic-acid to PQQ. In Pseudomonas putida (strain ATCC 700007 / DSM 6899 / JCM 31910 / BCRC 17059 / LMG 24140 / F1), this protein is Pyrroloquinoline-quinone synthase.